The following is a 392-amino-acid chain: Proteasomal ATPase-associated factor 1 (392 aa).

Ala-2 is modified (N-acetylalanine). 7 WD repeats span residues 82 to 121 (APYT…IWQA), 125 to 163 (ELRR…IWSA), 167 to 205 (SCVV…LWDC), 209 to 259 (ACLG…LARE), 270 to 308 (SRQL…QLDV), 313 to 349 (APVQ…IVQQ), and 353 to 389 (YVTE…RYQL).

It belongs to the WD repeat PAAF1/RPN14 family. In terms of assembly, interacts with PSMC1, PSMC2, PSMC3, PSMC4, PSMC5 and PSMC6. Interacts with SUPT6H. (Microbial infection) Interacts with HIV-1 Tat. As to expression, ubiquitously expressed, with highest levels in kidney, brain and testis.

Inhibits proteasome 26S assembly and proteolytic activity by impairing the association of the 19S regulatory complex with the 20S core. In case of HIV-1 infection, recruited by viral Tat to the HIV-1 promoter, where it promotes the recruitment of 19S regulatory complex through dissociation of the proteasome 26S. This presumably promotes provirus transcription efficiency. Protects SUPT6H from proteasomal degradation. In Homo sapiens (Human), this protein is Proteasomal ATPase-associated factor 1 (PAAF1).